A 193-amino-acid polypeptide reads, in one-letter code: Xanthine phosphoribosyltransferase (193 aa).

Xanthine contacts are provided by Leu20 and Thr27. Residue 128–132 (ANGQA) participates in 5-phospho-alpha-D-ribose 1-diphosphate binding. Lys156 contributes to the xanthine binding site.

This sequence belongs to the purine/pyrimidine phosphoribosyltransferase family. Xpt subfamily. In terms of assembly, homodimer.

The protein resides in the cytoplasm. It catalyses the reaction XMP + diphosphate = xanthine + 5-phospho-alpha-D-ribose 1-diphosphate. It functions in the pathway purine metabolism; XMP biosynthesis via salvage pathway; XMP from xanthine: step 1/1. Functionally, converts the preformed base xanthine, a product of nucleic acid breakdown, to xanthosine 5'-monophosphate (XMP), so it can be reused for RNA or DNA synthesis. This chain is Xanthine phosphoribosyltransferase, found in Streptococcus equi subsp. zooepidemicus (strain H70).